The chain runs to 459 residues: Inositol-trisphosphate 3-kinase A (459 aa).

Positions 1-29 (MTLPGRPTGMARPRGAGPCSPGLERAPRR) are disordered. Omega-N-methylarginine is present on residues arginine 35, arginine 55, and arginine 62. The tract at residues 49 to 164 (AAAGEPRARG…TSEDVGQKSH (116 aa)) is disordered. The span at 116 to 132 (RRLSTSSLSSTGSSSLL) shows a compositional bias: low complexity. A phosphoserine mark is found at serine 135 and serine 195. ATP is bound by residues serine 195, lysine 207, 247 to 249 (QDL), and aspartate 260. Positions 262 and 283 each coordinate substrate. The segment at 285 to 293 (DMYKKMLAV) is calmodulin-binding. 310 to 317 (KPRYMQWR) contacts substrate. ATP contacts are provided by lysine 334 and aspartate 414. A substrate-binding site is contributed by lysine 417.

This sequence belongs to the inositol phosphokinase (IPK) family.

It is found in the cytoplasm. Its subcellular location is the cytoskeleton. The enzyme catalyses 1D-myo-inositol 1,4,5-trisphosphate + ATP = 1D-myo-inositol 1,3,4,5-tetrakisphosphate + ADP + H(+). Its activity is regulated as follows. Activated by calcium/calmodulin. Catalyzes the phosphorylation of 1D-myo-inositol 1,4,5-trisphosphate (InsP3) into 1D-myo-inositol 1,3,4,5-tetrakisphosphate and participates to the regulation of calcium homeostasis. The protein is Inositol-trisphosphate 3-kinase A of Mus musculus (Mouse).